The sequence spans 448 residues: MAHISFDASRLDKFVQSNELAEMQAMVNAADSQLREGTGAGNDFRGFLDLPVNYDKDEFARIKEAVAKIKSDSEIFVAIGIGGSYLGAKAAIDFLNNTFYNMLPAEQRDFPQVLFAGNSISSSYLSDLVNLIGDRDFSINVISKSGTTTEPSIAFRVLKDKLIKKYGKEEAKGRIYATTDRAKGALKTESDAEGYAEFVVPDDIGGRFSVLTAVGLLPIAVAGGDIDQLMKGAADARLEYTDTDVTKNDAYKYAALRNILYRKGYTTELLENYEPTLQYFSEWWKQLMGESEGKDQKGIYPSSANFSTDLHSLGQYIQEGRRNLMETVVNVEKPNSDIDIPADEQNLDGLGYLEGHTMDFVNKKAYQGVVLAHTDGGVPVMTVNIPDQTAYTLGYMIYFFEMAVSISGYLNGINPFNQPGVEAYKKNMFALLGKPGFEELGKELNERL.

The active-site Proton donor is the E290. Active-site residues include H311 and K425.

It belongs to the GPI family.

The protein resides in the cytoplasm. It catalyses the reaction alpha-D-glucose 6-phosphate = beta-D-fructose 6-phosphate. It participates in carbohydrate biosynthesis; gluconeogenesis. Its pathway is carbohydrate degradation; glycolysis; D-glyceraldehyde 3-phosphate and glycerone phosphate from D-glucose: step 2/4. Its function is as follows. Catalyzes the reversible isomerization of glucose-6-phosphate to fructose-6-phosphate. This chain is Glucose-6-phosphate isomerase, found in Latilactobacillus sakei subsp. sakei (strain 23K) (Lactobacillus sakei subsp. sakei).